We begin with the raw amino-acid sequence, 87 residues long: Lantipeptide prochlorosin 3.3 (87 aa).

A propeptide spanning residues 1–64 is cleaved from the precursor; the sequence is MSEEQLKAFI…DEELEAASGG (64 aa). Thr67 is subject to 2,3-didehydrobutyrine. Positions 75-85 form a cross-link, beta-methyllanthionine (Thr-Cys); that stretch reads TAGCYGGTKMC. The beta-methyllanthionine (Cys-Thr) cross-link spans 78-82; that stretch reads CYGGT.

Post-translationally, cross-links are proved in vitro, when coepressed in E.coli with the ProcM lanthionine synthetase. The beta-methyllanthionine residues have a DL configuration (with 2S,3S,6R stereochemistry). In terms of processing, maturation of prochlorosin involves the enzymatic conversion of Thr, and Ser into dehydrated AA and the formation of thioether bonds with cysteines. This is followed by membrane translocation and cleavage of the modified precursor.

The protein resides in the secreted. Lanthionine-containing peptide (lantipeptide) with unknown function. Does not show antibiotic activity against Lactococcus lactis 117 and Bacillus subtilis 6633 bacteria. Organisms that produce this peptide live in oligotrophic environments at very dilute concentrations, suggesting this peptide is not secreted to influence other bacteria. This Prochlorococcus marinus (strain MIT 9313) protein is Lantipeptide prochlorosin 3.3.